Reading from the N-terminus, the 191-residue chain is DNA-directed RNA polymerase subunit Rpo3 (191 aa).

The protein belongs to the archaeal Rpo3/eukaryotic RPB3 RNA polymerase subunit family. As to quaternary structure, part of the RNA polymerase complex. Interacts with Rpo12. Forms an Rpo3-Rpo10-Rpo11-Rpo12 complex upon coexpression.

It is found in the cytoplasm. It catalyses the reaction RNA(n) + a ribonucleoside 5'-triphosphate = RNA(n+1) + diphosphate. Its function is as follows. DNA-dependent RNA polymerase (RNAP) catalyzes the transcription of DNA into RNA using the four ribonucleoside triphosphates as substrates. The sequence is that of DNA-directed RNA polymerase subunit Rpo3 from Methanocaldococcus jannaschii (strain ATCC 43067 / DSM 2661 / JAL-1 / JCM 10045 / NBRC 100440) (Methanococcus jannaschii).